The sequence spans 531 residues: Light-independent protochlorophyllide reductase subunit B (531 aa).

Asp36 serves as a coordination point for [4Fe-4S] cluster. The Proton donor role is filled by Asp287. 422 to 423 (GL) contributes to the substrate binding site.

It belongs to the ChlB/BchB/BchZ family. Protochlorophyllide reductase is composed of three subunits; BchL, BchN and BchB. Forms a heterotetramer of two BchB and two BchN subunits. [4Fe-4S] cluster serves as cofactor.

The catalysed reaction is chlorophyllide a + oxidized 2[4Fe-4S]-[ferredoxin] + 2 ADP + 2 phosphate = protochlorophyllide a + reduced 2[4Fe-4S]-[ferredoxin] + 2 ATP + 2 H2O. It functions in the pathway porphyrin-containing compound metabolism; bacteriochlorophyll biosynthesis (light-independent). Functionally, component of the dark-operative protochlorophyllide reductase (DPOR) that uses Mg-ATP and reduced ferredoxin to reduce ring D of protochlorophyllide (Pchlide) to form chlorophyllide a (Chlide). This reaction is light-independent. The NB-protein (BchN-BchB) is the catalytic component of the complex. In Rhodopseudomonas palustris (strain BisA53), this protein is Light-independent protochlorophyllide reductase subunit B.